The sequence spans 196 residues: 3-isopropylmalate dehydratase small subunit (196 aa).

The protein belongs to the LeuD family. LeuD type 1 subfamily. In terms of assembly, heterodimer of LeuC and LeuD.

The catalysed reaction is (2R,3S)-3-isopropylmalate = (2S)-2-isopropylmalate. It participates in amino-acid biosynthesis; L-leucine biosynthesis; L-leucine from 3-methyl-2-oxobutanoate: step 2/4. In terms of biological role, catalyzes the isomerization between 2-isopropylmalate and 3-isopropylmalate, via the formation of 2-isopropylmaleate. This is 3-isopropylmalate dehydratase small subunit from Streptococcus gordonii (strain Challis / ATCC 35105 / BCRC 15272 / CH1 / DL1 / V288).